We begin with the raw amino-acid sequence, 313 residues long: Glutathione synthetase (313 aa).

The region spanning K125–E309 is the ATP-grasp domain. R151–G207 is an ATP binding site. Positions 280 and 282 each coordinate Mg(2+).

The protein belongs to the prokaryotic GSH synthase family. Mg(2+) is required as a cofactor. The cofactor is Mn(2+).

The catalysed reaction is gamma-L-glutamyl-L-cysteine + glycine + ATP = glutathione + ADP + phosphate + H(+). Its pathway is sulfur metabolism; glutathione biosynthesis; glutathione from L-cysteine and L-glutamate: step 2/2. The chain is Glutathione synthetase from Mesorhizobium japonicum (strain LMG 29417 / CECT 9101 / MAFF 303099) (Mesorhizobium loti (strain MAFF 303099)).